An 88-amino-acid polypeptide reads, in one-letter code: MVKCSISSIGNVKSISKSNNLSSLSNSSSSLQSMNSIQCGGGCGNGGLLGGVGGLVGGVLVGTGVIVGSVLHGVGSILTGGSNNCGCN.

Belongs to the hssA/B family.

The chain is HssA/B-like protein 19 (hssl19) from Dictyostelium discoideum (Social amoeba).